We begin with the raw amino-acid sequence, 159 residues long: NAD(P)H-quinone oxidoreductase subunit J, chloroplastic (159 aa).

This sequence belongs to the complex I 30 kDa subunit family. NDH is composed of at least 16 different subunits, 5 of which are encoded in the nucleus.

The protein localises to the plastid. The protein resides in the chloroplast thylakoid membrane. It carries out the reaction a plastoquinone + NADH + (n+1) H(+)(in) = a plastoquinol + NAD(+) + n H(+)(out). The enzyme catalyses a plastoquinone + NADPH + (n+1) H(+)(in) = a plastoquinol + NADP(+) + n H(+)(out). Functionally, NDH shuttles electrons from NAD(P)H:plastoquinone, via FMN and iron-sulfur (Fe-S) centers, to quinones in the photosynthetic chain and possibly in a chloroplast respiratory chain. The immediate electron acceptor for the enzyme in this species is believed to be plastoquinone. Couples the redox reaction to proton translocation, and thus conserves the redox energy in a proton gradient. This is NAD(P)H-quinone oxidoreductase subunit J, chloroplastic from Agrostis stolonifera (Creeping bentgrass).